The sequence spans 209 residues: Geminin (209 aa).

Positions 1–79 (MNPSMKQKQE…PESSENKNLG (79 aa)) are disordered. The span at 7–16 (QKQEEIKENI) shows a compositional bias: basic and acidic residues. Residue Lys27 is modified to N6-acetyllysine. A phosphoserine mark is found at Ser34, Ser36, Ser49, Ser63, and Ser64. Residues 82 to 161 (TQESFDLMIK…AELIERLNGE (80 aa)) are necessary and sufficient for interaction with IDAS and CDT1. Residues 94 to 144 (PSSQYWKEVAEKRRKALYEALKENEKLHKEIEQKDNEIARLKKENKELAEV) are a coiled coil. Positions 164–209 (DNFESLDNQEFDSEEETVEDSLVEDSEIGTCAEGTVSSSTDAKPCI) are disordered. Positions 170-190 (DNQEFDSEEETVEDSLVEDSE) are homeodomain binding. A compositionally biased stretch (acidic residues) spans 170–190 (DNQEFDSEEETVEDSLVEDSE). Ser184 is subject to Phosphoserine; by CK2. The span at 198 to 209 (TVSSSTDAKPCI) shows a compositional bias: polar residues.

Belongs to the geminin family. In terms of assembly, homotetramer. Interacts with CDT1; this inhibits binding of the MCM complex to origins of replication. The complex with CDT1 exists in two forms, a 'permissive' heterotrimer and an 'inhibitory' heterohexamer. Interacts (via coiled-coil domain) with IDAS (via coiled-coil domain); this targets GMNN to the nucleus. The heterodimer formed by GMNN and MCIDAS has much lower affinity for CDT1 than the GMNN homodimer. Interacts with a subset of Hox proteins, affinity increasing from anterior to posterior types, the strongest interaction being with HOXB1, HOXC9 and HOXD10. Interacts with LRWD1 from G1/S to mitosis. In terms of processing, phosphorylated during mitosis. Phosphorylation at Ser-184 by CK2 results in enhanced binding to Hox proteins and more potent inhibitory effect on Hox transcriptional activity.

It localises to the cytoplasm. Its subcellular location is the nucleus. Its function is as follows. Inhibits DNA replication by preventing the incorporation of MCM complex into pre-replication complex (pre-RC). It is degraded during the mitotic phase of the cell cycle. Its destruction at the metaphase-anaphase transition permits replication in the succeeding cell cycle. Inhibits histone acetyltransferase activity of KAT7/HBO1 in a CDT1-dependent manner, inhibiting histone H4 acetylation and DNA replication licensing. Inhibits the transcriptional activity of a subset of Hox proteins, enrolling them in cell proliferative control. The polypeptide is Geminin (GMNN) (Homo sapiens (Human)).